Reading from the N-terminus, the 781-residue chain is MAELSPEFILNMTSDAKVRIIVEKIRKLSNITTRPPEMTLYNDQFDPEQCPGTLLPFTCYVITGTAGAGKSTSISALYQNLNCLITGATTVASQNLSRCLKTYCPTIFNAFGFKSKHINILPRSVPRRTLDTIEQIQNFELCKYWPILTSIIQEFSKKKNLGQYSSISLAAFNMLAKMTTTLWTTNVIVIDEAGTLSSHILTAVVFCYWFYNSWLNTPLYRSGAVPCIVCVGSPTQTDAFNSTYNHIQQKYNIMECDNILSFIIGNKVVSEYISLTNNWALFINNKRCTDPEFGHLLKTLEYSLKISPKTMEYIDRFVVPKAQILNPLEFLGWTRLFLSHAEVKSYLSSLHTALVTGTNVSGAKLFTCPIVCEVFTKAFNEYKSHVNLPSLTATEWLSKNLHRLSNYSQFIDQDMTAIHTETTDTSTKVTYLTKYVKNTYISLNGKTKKCVCGYVGTYKNFKKILESESFIDSHANDQPEFVYSFLCTILYNSLYNFHNYGVTEKNESYLNDLANLKLPENLTHLYTQTDLDIEREALMLEDDVFYHMVSPPPTASSASLPCLISWYTALKDIFISRLKLATTWFSNKFLDREFTSFTINMLVRDNIEFTSTNGRLHGLLEYASTVESYKLQGYTFLPVNFGRSQTTVISKDLQDKMPSIVVQDSSGFIACLEKNVNKMLETLDDGKSFHLCSAGDYGISSKLAMTIVKAQGTSLDKVAICFSNHKKIKVSHIYVAISRATNPNHIVMDCNPLKLLVNDTQSISSQHIIKALNNPNTLLVY.

Residue 64 to 71 (GTAGAGKS) coordinates ATP.

The protein belongs to the herpesviridae helicase family. Associates with the primase and the primase-associated factor to form the helicase-primase complex.

It is found in the host nucleus. This protein may be a helicase and is required for replication of viral DNA. Its function is as follows. Component of the helicase/primase complex. Unwinds the DNA at the replication forks and generates single-stranded DNA for both leading and lagging strand synthesis. The primase synthesizes short RNA primers on the lagging strand that the polymerase elongates using dNTPs. Possesses helicase-like motifs and therefore may act as the helicase subunit of the complex. This is DNA replication helicase from Saimiriine herpesvirus 2 (strain 11) (SaHV-2).